Consider the following 326-residue polypeptide: Probable cell division protein WhiA (326 aa).

The segment at residues 275-308 (SLDELGHHADPPMTKDAVAGRIRRLLAMADKKAV) is a DNA-binding region (H-T-H motif).

The protein belongs to the WhiA family.

Its function is as follows. Involved in cell division and chromosome segregation. This Clavibacter michiganensis subsp. michiganensis (strain NCPPB 382) protein is Probable cell division protein WhiA.